We begin with the raw amino-acid sequence, 240 residues long: Probable xyloglucan-specific endo-beta-1,4-glucanase A (240 aa).

The N-terminal stretch at 1–15 (MKFLTPLVLSSLASA) is a signal peptide.

This sequence belongs to the glycosyl hydrolase 12 (cellulase H) family.

It localises to the secreted. It carries out the reaction xyloglucan + H2O = xyloglucan oligosaccharides.. Catalyzes endohydrolysis of 1,4-beta-D-glucosidic linkages in xyloglucan with retention of the beta-configuration of the glycosyl residues. Specific for xyloglucan and does not hydrolyze other cell wall components. The protein is Probable xyloglucan-specific endo-beta-1,4-glucanase A (xgeA) of Aspergillus oryzae (strain ATCC 42149 / RIB 40) (Yellow koji mold).